A 466-amino-acid polypeptide reads, in one-letter code: Chromogranin-A (466 aa).

The signal sequence occupies residues methionine 1–alanine 18. Cysteine 35 and cysteine 56 form a disulfide bridge. The segment at alanine 91–leucine 443 is disordered. Positions glutamine 92–glutamine 111 are enriched in low complexity. Serine 114 is subject to Phosphoserine. The segment covering lysine 131–glutamine 155 has biased composition (basic and acidic residues). Residues glutamate 177–glutamate 213 are compositionally biased toward polar residues. A Phosphoserine modification is found at serine 215. Positions lysine 233 to lysine 247 are enriched in acidic residues. The segment covering glutamate 248 to proline 259 has biased composition (basic and acidic residues). Residues serine 288 and serine 312 each carry the phosphoserine modification. Basic and acidic residues predominate over residues glycine 305 to glutamine 314. At glycine 332 the chain carries Glycine amide. Over residues arginine 351–glutamate 378 the composition is skewed to basic and acidic residues. A phosphoserine mark is found at serine 353 and serine 386. Methionine 387 bears the Methionine sulfoxide mark. Positions serine 412–aspartate 440 are enriched in basic and acidic residues. 3 positions are modified to phosphoserine: serine 413, serine 417, and serine 433. Serine 433 carries O-linked (Xyl...) (chondroitin sulfate) serine glycosylation. Residue glutamine 441 is modified to Pyrrolidone carboxylic acid. Residue serine 447 is modified to Phosphoserine.

This sequence belongs to the chromogranin/secretogranin protein family. As to quaternary structure, self-interacts; self-assembly is promoted in vitro by chondroitin sulfate attachment which occurs at mildly acidic pH conditions. Interacts with SCG3; this interaction is optimal in conditions mimicking the lumenal milieu of the trans-Golgi network, i.e. pH 5.5 and 10 mM Ca(+2). Interacts with ITPR1 in the secretory granules. O-glycosylated; contains chondroitin sulfate (CS). CS attachment is pH-dependent, being observed at mildly acidic conditions of pH 5 but not at neutral pH, and promotes self-assembly in vitro. Expressed in the brain and adrenal and pituitary glands.

Its subcellular location is the cytoplasmic vesicle. It is found in the secretory vesicle. The protein resides in the neuronal dense core vesicle. The protein localises to the secreted. Its function is as follows. Strongly inhibits glucose induced insulin release from the pancreas. Functionally, catestatin inhibits catecholamine release from chromaffin cells and noradrenergic neurons by acting as a non-competitive nicotinic cholinergic antagonist. Can induce mast cell migration, degranulation and production of cytokines and chemokines. Serpinin regulates granule biogenesis in endocrine cells by up-regulating the transcription of protease nexin 1 (SERPINE2) via a cAMP-PKA-SP1 pathway. This leads to inhibition of granule protein degradation in the Golgi complex which in turn promotes granule formation. Serpinin and pGlu-serpinin can enhance both myocardial contractility (inotropy) and relaxation (lusitropy) and this cardio-stimulation requires a beta 1-adrenergic receptor/adenylate cyclase/cAMP/PKA pathway. This chain is Chromogranin-A (Chga), found in Rattus norvegicus (Rat).